Here is a 393-residue protein sequence, read N- to C-terminus: MKTLIVLMCSLVVVWARYENEMRLANNRFAVDLLRGLPSSPEKNIFFSPYSISTAMGMVFAGAKGETLKNLYDGFGYLRSGLKEDWVLQAYADHAKQLQVGQSQSTFDVANAAAIHERLALLSAYENTLDSTFHAQLLKVDFVNGGPAAIDEINRWVKQKTHDKIDKLFDGPLDPLTRLVLLNAIFFKGVWSTKFDENATTKKQFLNGGTTPTQVDTMTKSIRIGYKLLPTMRLEIAELPYDGGNYSMVILLPRGSEGIEAFKHSLTDHRLQDYIGHVELREVAVSLPKFKLETEYSLKDSLKSLGITEIFGTQADLSGISSDGELVVSDVVHKAVVEVNEEGTEAAAVSGVAVVTRLIEVPTLELNVNQPFLFFIRNTHTKDLLFAGQVNHL.

Positions 1–16 (MKTLIVLMCSLVVVWA) are cleaved as a signal peptide. N-linked (GlcNAc...) asparagine glycans are attached at residues Asn-198 and Asn-245.

Belongs to the serpin family. As to expression, highly expressed in female salivary gland during blood feeding. Expressed in female midgut and ovary during blood feeding.

The protein resides in the secreted. Its function is as follows. Serine protease inhibitor that modulates blood feeding of ticks on vertebrate species. Inhibits host neutrophil elastase (ELANE) and proteinase 3/myeloblastin (PRTN3). Moderately inhibits host chymase, cathepsin G (CTSG), trypsin and alpha-chymotrypsin. Decreases host neutrophil migration. Decreases nitric oxide production by host macrophages. Decreases host complement activity. The protein is Iripin-5 of Ixodes ricinus (Common tick).